The chain runs to 55 residues: Conotoxin Cal22c (55 aa).

The propeptide occupies 1–5 (GRPSA).

Post-translationally, contains 4 disulfide bonds. As to expression, expressed by the venom duct.

Its subcellular location is the secreted. Probable neurotoxin with unknown target. Possibly targets ion channels. This is Conotoxin Cal22c from Californiconus californicus (California cone).